A 398-amino-acid polypeptide reads, in one-letter code: Lipoyl synthase, mitochondrial (398 aa).

A mitochondrion-targeting transit peptide spans 1–32 (MIALRVHNTRVVSRSLTVWTRPSPTLTLSRSL). The [4Fe-4S] cluster site is built by Cys117, Cys122, Cys128, Cys147, Cys151, Cys154, and Ser362. Positions 132 to 351 (KKSEATATIM…RDTALEMGFL (220 aa)) constitute a Radical SAM core domain.

Belongs to the radical SAM superfamily. Lipoyl synthase family. Requires [4Fe-4S] cluster as cofactor.

It localises to the mitochondrion. The catalysed reaction is [[Fe-S] cluster scaffold protein carrying a second [4Fe-4S](2+) cluster] + N(6)-octanoyl-L-lysyl-[protein] + 2 oxidized [2Fe-2S]-[ferredoxin] + 2 S-adenosyl-L-methionine + 4 H(+) = [[Fe-S] cluster scaffold protein] + N(6)-[(R)-dihydrolipoyl]-L-lysyl-[protein] + 4 Fe(3+) + 2 hydrogen sulfide + 2 5'-deoxyadenosine + 2 L-methionine + 2 reduced [2Fe-2S]-[ferredoxin]. It participates in protein modification; protein lipoylation via endogenous pathway; protein N(6)-(lipoyl)lysine from octanoyl-[acyl-carrier-protein]: step 2/2. In terms of biological role, catalyzes the radical-mediated insertion of two sulfur atoms into the C-6 and C-8 positions of the octanoyl moiety bound to the lipoyl domains of lipoate-dependent enzymes, thereby converting the octanoylated domains into lipoylated derivatives. The protein is Lipoyl synthase, mitochondrial of Scheffersomyces stipitis (strain ATCC 58785 / CBS 6054 / NBRC 10063 / NRRL Y-11545) (Yeast).